The sequence spans 319 residues: Putative replication factor C small subunit R395 (319 aa).

An ATP-binding site is contributed by 45–52 (GSPGVGKT).

It belongs to the activator 1 small subunits family. RfcS subfamily.

Part of the RFC clamp loader complex which loads the PCNA sliding clamp onto DNA. This is Putative replication factor C small subunit R395 from Acanthamoeba polyphaga mimivirus (APMV).